We begin with the raw amino-acid sequence, 571 residues long: Glycine--tRNA ligase (571 aa).

Substrate contacts are provided by Arg-99 and Glu-165. ATP contacts are provided by residues 197-199 (RNE), 207-212 (IRLREF), 324-325 (EC), and 443-446 (GIDR). 212 to 216 (FTQAE) provides a ligand contact to substrate. Residue 439–443 (EPSFG) participates in substrate binding.

Belongs to the class-II aminoacyl-tRNA synthetase family.

It is found in the cytoplasm. It carries out the reaction tRNA(Gly) + glycine + ATP = glycyl-tRNA(Gly) + AMP + diphosphate. Catalyzes the attachment of glycine to tRNA(Gly). The polypeptide is Glycine--tRNA ligase (Pyrococcus abyssi (strain GE5 / Orsay)).